The primary structure comprises 290 residues: L-proline cis-3-hydroxylase 2 (290 aa).

The Fe cation site is built by His107, Asp109, and His158. Arg168 is a binding site for 2-oxoglutarate.

This sequence belongs to the L-proline cis-4-/cis-3-hydroxylase family. In terms of assembly, homodimer. The cofactor is Fe(2+).

The enzyme catalyses L-proline + 2-oxoglutarate + O2 = cis-3-hydroxy-L-proline + succinate + CO2. With respect to regulation, inhibited by metal ions such as Co(2+), Zn(2+), Ni(2+) or Cu(2+). Is also inhibited by EDTA in vitro. In terms of biological role, dioxygenase that catalyzes the 2-oxoglutarate-dependent selective hydroxylation of free L-proline to cis-3-hydroxy-L-proline (cis-3-Hyp). This is L-proline cis-3-hydroxylase 2 from Streptomyces sp.